The sequence spans 2571 residues: Highly reducing polyketide synthase 19 (2571 aa).

The tract at residues 1–51 (MSPIFLGDSEDAATCRCGPPSSPSPELSGTETALTSDSDGPELLNPGPQGP) is disordered. Residues 27–38 (LSGTETALTSDS) show a composition bias toward polar residues. The region spanning 51 to 485 (PEPIAIIGMG…GANAHCILES (435 aa)) is the Ketosynthase family 3 (KS3) domain. Active-site for beta-ketoacyl synthase activity residues include cysteine 224, histidine 359, and histidine 398. Residues 609 to 932 (VFTGQGAQWA…PYNSALLRGK (324 aa)) are malonyl-CoA:ACP transacylase (MAT) domain. Serine 701 functions as the For malonyltransferase activity in the catalytic mechanism. An N-terminal hotdog fold region spans residues 1019 to 1163 (HDLLGSRVPG…GLVKLTQNED (145 aa)). The segment at 1019–1340 (HDLLGSRVPG…SGCRMVPYSS (322 aa)) is dehydratase (DH) domain. The PKS/mFAS DH domain occupies 1019–1344 (HDLLGSRVPG…MVPYSSGTAV (326 aa)). The Proton acceptor; for dehydratase activity role is filled by histidine 1051. The interval 1177-1344 (MEQSAPRTWY…MVPYSSGTAV (168 aa)) is C-terminal hotdog fold. Catalysis depends on aspartate 1241, which acts as the Proton donor; for dehydratase activity. The tract at residues 1800 to 2140 (NMSDAFVFTR…AFRALSGSTT (341 aa)) is enoyl reductase (ER) domain. Residues 2177–2355 (SYLLVGCLGG…ATSVGLGMIS (179 aa)) form a ketoreductase (KR) domain region. In terms of domain architecture, Carrier spans 2490 to 2568 (AVAAQALELV…MLSELIAGKL (79 aa)). Position 2527 is an O-(pantetheine 4'-phosphoryl)serine (serine 2527).

It participates in polyketide biosynthesis. Highly reducing polyketide synthase; part of the gene cluster that mediates the biosynthesis of pyriculol and pyriculariol, two heptaketides that induce lesion formation upon application on rice leaves but are dispensable for pathogenicity. The highly reducing polyketide synthase synthesizes the heptaketide backbone of pyriculol and pyriculariol. Pyriculol and pyriculariol contain several hydroxyl moieties and double bonds, so it can be assumed that several reduction steps occur during biosynthesis. These reactions could be executed by PKS19 itself or partly by the tailoring enzymes OXR1, PXR2, RED1, RED2 or RED3, identified within the cluster. The FAD-linked oxidoreductase OXR1 is the only tailoring enzyme for which the function has been determined yet, and is involved in the oxidation of dihydropyriculol and dihydropyriculariol into pyriculol and pyriculariol, respectively. The polypeptide is Highly reducing polyketide synthase 19 (Pyricularia oryzae (strain 70-15 / ATCC MYA-4617 / FGSC 8958) (Rice blast fungus)).